The chain runs to 251 residues: Imidazole glycerol phosphate synthase subunit HisF (251 aa).

Active-site residues include aspartate 11 and aspartate 130.

The protein belongs to the HisA/HisF family. As to quaternary structure, heterodimer of HisH and HisF.

The protein resides in the cytoplasm. The catalysed reaction is 5-[(5-phospho-1-deoxy-D-ribulos-1-ylimino)methylamino]-1-(5-phospho-beta-D-ribosyl)imidazole-4-carboxamide + L-glutamine = D-erythro-1-(imidazol-4-yl)glycerol 3-phosphate + 5-amino-1-(5-phospho-beta-D-ribosyl)imidazole-4-carboxamide + L-glutamate + H(+). Its pathway is amino-acid biosynthesis; L-histidine biosynthesis; L-histidine from 5-phospho-alpha-D-ribose 1-diphosphate: step 5/9. Its function is as follows. IGPS catalyzes the conversion of PRFAR and glutamine to IGP, AICAR and glutamate. The HisF subunit catalyzes the cyclization activity that produces IGP and AICAR from PRFAR using the ammonia provided by the HisH subunit. This Pelodictyon phaeoclathratiforme (strain DSM 5477 / BU-1) protein is Imidazole glycerol phosphate synthase subunit HisF.